Reading from the N-terminus, the 182-residue chain is Large ribosomal subunit protein uL10 (182 aa).

This sequence belongs to the universal ribosomal protein uL10 family. In terms of assembly, part of the ribosomal stalk of the 50S ribosomal subunit. The N-terminus interacts with L11 and the large rRNA to form the base of the stalk. The C-terminus forms an elongated spine to which L12 dimers bind in a sequential fashion forming a multimeric L10(L12)X complex.

Forms part of the ribosomal stalk, playing a central role in the interaction of the ribosome with GTP-bound translation factors. The sequence is that of Large ribosomal subunit protein uL10 from Microcystis aeruginosa (strain NIES-843 / IAM M-2473).